A 338-amino-acid polypeptide reads, in one-letter code: Lipoate-protein ligase A (338 aa).

The 188-residue stretch at 29–216 (PATQRVLFLW…AFFAYYGERV (188 aa)) folds into the BPL/LPL catalytic domain. Residues R71, 76–79 (GAVF), and K134 each bind ATP. Position 134 (K134) interacts with (R)-lipoate.

This sequence belongs to the LplA family. In terms of assembly, monomer.

The protein resides in the cytoplasm. The enzyme catalyses L-lysyl-[lipoyl-carrier protein] + (R)-lipoate + ATP = N(6)-[(R)-lipoyl]-L-lysyl-[lipoyl-carrier protein] + AMP + diphosphate + H(+). The protein operates within protein modification; protein lipoylation via exogenous pathway; protein N(6)-(lipoyl)lysine from lipoate: step 1/2. It participates in protein modification; protein lipoylation via exogenous pathway; protein N(6)-(lipoyl)lysine from lipoate: step 2/2. In terms of biological role, catalyzes both the ATP-dependent activation of exogenously supplied lipoate to lipoyl-AMP and the transfer of the activated lipoyl onto the lipoyl domains of lipoate-dependent enzymes. The polypeptide is Lipoate-protein ligase A (Cronobacter sakazakii (strain ATCC BAA-894) (Enterobacter sakazakii)).